Here is a 692-residue protein sequence, read N- to C-terminus: Protein hook (692 aa).

Residues 6-123 (SEMYYSLLEW…RLLQLVLGCA (118 aa)) form the Calponin-homology (CH) domain. A coiled-coil region spans residues 135–576 (EIMGLEEELQ…YQSKVIQLET (442 aa)). The interval 161–180 (AGERSPSSSASGGAGSGGAV) is disordered.

Belongs to the hook family. As to quaternary structure, homodimer. Interacts with microtubules via its N-terminus.

The protein resides in the cytoplasm. It is found in the cytoskeleton. Its subcellular location is the endosome. The protein localises to the synapse. In terms of biological role, involved in endocytic trafficking by stabilizing organelles of the endocytic pathway. Probably acts as a cytoskeletal linker protein required to tether endosome vesicles to the cytoskeleton. Involved in modulation of endocytosis at stages required for down-regulation of membrane proteins that control synapse size. Not involved in synaptic vesicle recycling. Required in R7 cells for boss endocytosis into multivesicular bodies (MVBs). Has a role in regulating adult longevity. This chain is Protein hook, found in Drosophila willistoni (Fruit fly).